We begin with the raw amino-acid sequence, 168 residues long: MAVLSGDEIRKLIQKEGLIRDYVDLETQIQPNGFDCTLRSVYRLRGCGRVDFDNSRRELPELEEVEFRDWVYLPKGVYRAKLNEVVRLGNDIMAIARPRSTLIRCGANVLTAVWDAGYEGRSEVSIVVHNDYGIWLSRNARIIQLVFIRLSSPTKGYEGVYKGENIDS.

It belongs to the dCTP deaminase family. Archaeal dUTPase subfamily.

It catalyses the reaction dUTP + H2O = dUMP + diphosphate + H(+). Its pathway is pyrimidine metabolism; dUMP biosynthesis; dUMP from dCTP (dUTP route): step 2/2. Its function is as follows. This enzyme is involved in nucleotide metabolism: it produces dUMP, the immediate precursor of thymidine nucleotides and it decreases the intracellular concentration of dUTP so that uracil cannot be incorporated into DNA. This Archaeoglobus fulgidus (strain ATCC 49558 / DSM 4304 / JCM 9628 / NBRC 100126 / VC-16) protein is Probable deoxyuridine 5'-triphosphate nucleotidohydrolase.